Here is a 1004-residue protein sequence, read N- to C-terminus: Protein phosphatase 1 regulatory subunit 12A (1004 aa).

Residues 35–38 are important for interaction with PPP1CB; it reads KVKF. ANK repeat units follow at residues 39–68, 72–101, 105–134, 138–164, 198–227, and 231–260; these read DDGA…DINY, DGLT…NINQ, EGWI…HVGA, EGDT…RQGV, SGGT…DVNI, and DGWT…DMEA. A compositionally biased stretch (basic and acidic residues) spans 291-300; it reads HSEKREKKSP. Residues 291-920 are disordered; it reads HSEKREKKSP…SYLEDRKPYC (630 aa). Polar residues predominate over residues 302-316; the sequence is IESTANLDNNQTQKT. Basic and acidic residues-rich tracts occupy residues 318–329 and 336–353; these read KNKETLIMEQEK and SLEH…KDES. The segment covering 357–369 has biased composition (acidic residues); that stretch reads SEEEEDDDSESEA. Polar residues predominate over residues 378 to 392; sequence ANANTTSTQSASMTA. Residues 417-427 are compositionally biased toward basic and acidic residues; that stretch reads SPKEEERKDES. The segment covering 464–475 has biased composition (low complexity); the sequence is RSASSPRLSSSL. A compositionally biased stretch (basic and acidic residues) spans 476–486; it reads DNKEKEKDGKG. Low complexity predominate over residues 514–525; that stretch reads SSASSIRSGSSY. A compositionally biased stretch (basic and acidic residues) spans 528 to 538; sequence RKWEEDVKKNS. Residues 539-554 are compositionally biased toward polar residues; it reads LNEGPTSLNTSYQRSG. Low complexity-rich tracts occupy residues 564 to 578 and 587 to 602; these read VSSN…VTSS and ASAN…STSA. Positions 613 to 624 are enriched in basic and acidic residues; sequence WAEDSTEKEKDS. Over residues 625–659 the composition is skewed to low complexity; it reads VPTAVTVPVAPSVVNAAATTTAMTTATSGTVSSTS. The span at 672–681 shows a compositional bias: basic and acidic residues; that stretch reads VRDEESESQR. The span at 682–692 shows a compositional bias: basic residues; the sequence is KARSRQARQSR. Thr-695 is modified (phosphothreonine; by ROCK2). Basic and acidic residues predominate over residues 717–765; sequence RTREQENEEKEKEEKEKQDKEKQEEKKESETKDDDYRQRYSRTVEEPYH. Residues 770–793 show a composition bias toward low complexity; that stretch reads TSTSTSTSSTSSLSTSTSSLSSSS. Residues 794–808 are compositionally biased toward polar residues; the sequence is QLNRPNSLIGITSAY. The segment covering 812–837 has biased composition (basic and acidic residues); it reads GTKESEREGGKKEEEKEEDKSQPKSI. Basic residues predominate over residues 838 to 849; the sequence is RERRRPREKRRS. Thr-850 carries the phosphothreonine; by ROCK2 modification. A compositionally biased stretch (basic and acidic residues) spans 864–880; the sequence is QEHQSDSEEGTNKKETQ. The segment covering 881–896 has biased composition (polar residues); the sequence is SDSLSRYDTGSLSVSS.

In terms of assembly, PP1 comprises a catalytic subunit, PPP1CA, PPP1CB or PPP1CC, and one or several targeting or regulatory subunits. PPP1R12A mediates binding to myosin. Phosphorylated by CIT (Rho-associated kinase) and by ROCK2 on serine and threonine residues. Phosphorylation at Thr-695 leads to inhibition of myosin phosphatase activity. Phosphorylation at Thr-850 abolishes myosin binding. May be phosphorylated at Thr-695 by DMPK; may inhibit the myosin phosphatase activity. Detected in brain, lung, aorta, heart, gizzard, stomach, oviduct, spleen, kidney and small intestine.

It localises to the cytoplasm. The protein resides in the cytoskeleton. It is found in the stress fiber. Its function is as follows. Regulates myosin phosphatase activity. The sequence is that of Protein phosphatase 1 regulatory subunit 12A (PPP1R12A) from Gallus gallus (Chicken).